Here is a 160-residue protein sequence, read N- to C-terminus: Ribosomal RNA large subunit methyltransferase H (160 aa).

Residues L78, G109, and 128–133 contribute to the S-adenosyl-L-methionine site; that span reads LSNLTL.

It belongs to the RNA methyltransferase RlmH family. As to quaternary structure, homodimer.

The protein resides in the cytoplasm. It carries out the reaction pseudouridine(1915) in 23S rRNA + S-adenosyl-L-methionine = N(3)-methylpseudouridine(1915) in 23S rRNA + S-adenosyl-L-homocysteine + H(+). Its function is as follows. Specifically methylates the pseudouridine at position 1915 (m3Psi1915) in 23S rRNA. This chain is Ribosomal RNA large subunit methyltransferase H, found in Alcanivorax borkumensis (strain ATCC 700651 / DSM 11573 / NCIMB 13689 / SK2).